The sequence spans 138 residues: Large ribosomal subunit protein bL17 (138 aa).

This sequence belongs to the bacterial ribosomal protein bL17 family. In terms of assembly, part of the 50S ribosomal subunit. Contacts protein L32.

The chain is Large ribosomal subunit protein bL17 from Jannaschia sp. (strain CCS1).